Here is a 309-residue protein sequence, read N- to C-terminus: DnaJ-like protein MG002 homolog (309 aa).

A J domain is found at Met-1–Phe-66.

The sequence is that of DnaJ-like protein MG002 homolog from Mycoplasma pneumoniae (strain ATCC 29342 / M129 / Subtype 1) (Mycoplasmoides pneumoniae).